A 486-amino-acid polypeptide reads, in one-letter code: Katanin p60 ATPase-containing subunit A1 (486 aa).

The disordered stretch occupies residues 103-174; the sequence is RSSPLPVRRP…NKAEVSEKEV (72 aa). Basic and acidic residues predominate over residues 143–174; the sequence is NGDRAKPLKGKEKKEAKPKDDKNKAEVSEKEV. 244 to 251 provides a ligand contact to ATP; the sequence is GPPGTGKT.

It belongs to the AAA ATPase family. Katanin p60 subunit A1 subfamily. As to quaternary structure, can homooligomerize into hexameric rings, which may be promoted by interaction with microtubules. Interacts with katnb1, which may serve as a targeting subunit.

Its subcellular location is the cytoplasm. It localises to the cytoskeleton. It is found in the microtubule organizing center. The protein resides in the centrosome. The protein localises to the spindle pole. Its subcellular location is the spindle. It carries out the reaction n ATP + n H2O + a microtubule = n ADP + n phosphate + (n+1) alpha/beta tubulin heterodimers.. Its activity is regulated as follows. ATPase activity is stimulated by microtubules, which promote homooligomerization. ATP-dependent microtubule severing is stimulated by interaction with katnb1. Its function is as follows. Catalytic subunit of a complex which severs microtubules in an ATP-dependent manner. Microtubule severing may promote rapid reorganization of cellular microtubule arrays and the release of microtubules from the centrosome following nucleation. This chain is Katanin p60 ATPase-containing subunit A1 (katna1), found in Salmo salar (Atlantic salmon).